Consider the following 264-residue polypeptide: ATP synthase subunit a (264 aa).

The next 6 membrane-spanning stretches (helical) occupy residues 29-49, 87-107, 134-154, 177-197, 208-228, and 235-255; these read TWHI…LWIF, NALI…MNFM, DLNI…YYSI, IPVN…SLAL, LIFI…SLGV, and LIFH…LTIV.

This sequence belongs to the ATPase A chain family. As to quaternary structure, F-type ATPases have 2 components, CF(1) - the catalytic core - and CF(0) - the membrane proton channel. CF(1) has five subunits: alpha(3), beta(3), gamma(1), delta(1), epsilon(1). CF(0) has three main subunits: a(1), b(2) and c(9-12). The alpha and beta chains form an alternating ring which encloses part of the gamma chain. CF(1) is attached to CF(0) by a central stalk formed by the gamma and epsilon chains, while a peripheral stalk is formed by the delta and b chains.

It localises to the cell inner membrane. Functionally, key component of the proton channel; it plays a direct role in the translocation of protons across the membrane. This is ATP synthase subunit a from Shewanella amazonensis (strain ATCC BAA-1098 / SB2B).